Reading from the N-terminus, the 1657-residue chain is Ras GTPase-activating-like protein IQGAP1 (1657 aa).

Residue Ser-2 is modified to N-acetylserine. Ser-2 is modified (phosphoserine). One can recognise a Calponin-homology (CH) domain in the interval 44–159 (LCHLEEAKRW…YCIHALSLYL (116 aa)). Phosphotyrosine is present on Tyr-172. The residue at position 330 (Ser-330) is a Phosphoserine. Residues 685–710 (WVKHWVKGGYHYYHNLETQAGGWAEP) enclose the WW domain. IQ domains are found at residues 745–774 (NEGLITKLQACCRGYLVRQEFRSRMNFLKK), 775–804 (QIPAITCIQSQWRGYKQKKAYQDRLAYLHS), 805–834 (HKDEVVKIQSLARMHQARKRYRDRLQYFRD), and 835–864 (HINDIIKIQAFIRANKARDDYKTLINAEDP). A C1 region spans residues 956–1274 (GGLKALSKEK…FFQVACDVPE (319 aa)). Residues 1020-1269 (YLLLRLFQTA…QKFRRFFQVA (250 aa)) form the Ras-GAP domain. A C2 region spans residues 1276-1657 (QDKFNVDEYS…FLLNKKFYGK (382 aa)). Ser-1441 is modified (phosphoserine).

Interacts with CDC42; the interaction is demonstrated with IQGAP1 in GTP-bound and in nucleotide-free state. Interacts with RAC1. Does not interact with RHOA. Interacts with TSG101. Interacts with PAK6. Interacts with SASH1. Interacts with PJVK. Interacts with SLC26A4. This interaction enhances the chloride-bicarbonate exchange activity of SLC26A4. Interacts with SVEP1. Interacts with ILK; the interaction is required for localization of IQGAP to the cell cortex. As to quaternary structure, (Microbial infection) In case of infection, interacts with S.typhimurium protein sseI. As to expression, expressed in the kidney (at protein level).

The protein localises to the cell membrane. The protein resides in the nucleus. Its subcellular location is the cytoplasm. It is found in the cell cortex. It localises to the apical cell membrane. The protein localises to the basolateral cell membrane. Its function is as follows. Plays a crucial role in regulating the dynamics and assembly of the actin cytoskeleton. Recruited to the cell cortex by interaction with ILK which allows it to cooperate with its effector DIAPH1 to locally stabilize microtubules and allow stable insertion of caveolae into the plasma membrane. Binds to activated CDC42 but does not stimulate its GTPase activity. Associates with calmodulin. May promote neurite outgrowth. May play a possible role in cell cycle regulation by contributing to cell cycle progression after DNA replication arrest. The sequence is that of Ras GTPase-activating-like protein IQGAP1 (Iqgap1) from Mus musculus (Mouse).